We begin with the raw amino-acid sequence, 303 residues long: Mitochondrial substrate carrier family protein E (303 aa).

At 1–8 the chain is on the mitochondrial intermembrane side; it reads MENKKESS. Solcar repeat units lie at residues 6–93, 104–197, and 210–298; these read ESSL…SKQW, ESTI…CKST, and LPIP…LKYL. Residues 9–29 traverse the membrane as a helical segment; that stretch reads LLYILTGATSGLLADSIMHPV. The Mitochondrial matrix segment spans residues 30-67; sequence DTVRARVQIEKVGKSQYKGTFNALNQIIKNEGVSYLYK. A helical membrane pass occupies residues 68–88; sequence GFPIVATATVPAHALYFLGYE. Residues 89 to 109 lie on the Mitochondrial intermembrane side of the membrane; sequence YSKQWVTDRYGKKWGESTITH. A helical membrane pass occupies residues 110–130; it reads FSAGFVADALGSLIWVPMDII. The Mitochondrial matrix segment spans residues 131-171; sequence KQRLQVQTNTQKLNPNQTYYKGSFHAGKIILQEEGIRGLYR. A helical transmembrane segment spans residues 172-192; the sequence is GFMPALATYGPFVGIYFSVYE. The Mitochondrial intermembrane segment spans residues 193-215; the sequence is KCKSTISSLLSKEKDQYLPIPYQ. A helical membrane pass occupies residues 216-236; sequence LGSGFFAGAFAAAVTCPLDVI. The Mitochondrial matrix portion of the chain corresponds to 237–268; the sequence is KTRIQVQRSTEKQIYKGMWDSFKTILKEEGPK. The chain crosses the membrane as a helical span at residues 269-289; sequence AFVKGMGARIWWIAPGNALTI. Topologically, residues 290-303 are mitochondrial intermembrane; sequence ASYEQLKYLFKDLI.

The protein belongs to the mitochondrial carrier (TC 2.A.29) family.

The protein localises to the mitochondrion inner membrane. Mitochondrial solute carriers shuttle metabolites, nucleotides, and cofactors through the mitochondrial inner membrane. This chain is Mitochondrial substrate carrier family protein E (mcfE), found in Dictyostelium discoideum (Social amoeba).